Here is a 264-residue protein sequence, read N- to C-terminus: Thymidylate synthase (264 aa).

Residue Arg-21 coordinates dUMP. (6R)-5,10-methylene-5,6,7,8-tetrahydrofolate is bound at residue His-51. 126–127 (RR) contributes to the dUMP binding site. Residue Cys-146 is the Nucleophile of the active site. DUMP contacts are provided by residues 166–169 (RSAD), Asn-177, and 207–209 (HLY). Asp-169 is a (6R)-5,10-methylene-5,6,7,8-tetrahydrofolate binding site. Ser-263 serves as a coordination point for (6R)-5,10-methylene-5,6,7,8-tetrahydrofolate.

Belongs to the thymidylate synthase family. Bacterial-type ThyA subfamily. As to quaternary structure, homodimer.

Its subcellular location is the cytoplasm. The enzyme catalyses dUMP + (6R)-5,10-methylene-5,6,7,8-tetrahydrofolate = 7,8-dihydrofolate + dTMP. Its pathway is pyrimidine metabolism; dTTP biosynthesis. Its function is as follows. Catalyzes the reductive methylation of 2'-deoxyuridine-5'-monophosphate (dUMP) to 2'-deoxythymidine-5'-monophosphate (dTMP) while utilizing 5,10-methylenetetrahydrofolate (mTHF) as the methyl donor and reductant in the reaction, yielding dihydrofolate (DHF) as a by-product. This enzymatic reaction provides an intracellular de novo source of dTMP, an essential precursor for DNA biosynthesis. The chain is Thymidylate synthase from Shouchella clausii (strain KSM-K16) (Alkalihalobacillus clausii).